A 492-amino-acid chain; its full sequence is Trypanothione reductase (492 aa).

An FAD-binding site is contributed by 35 to 52 (DVQTHHGPPHYAALGGTC). C52 and C57 are disulfide-bonded. The active-site Proton acceptor is H461.

The protein belongs to the class-I pyridine nucleotide-disulfide oxidoreductase family. As to quaternary structure, homodimer. FAD serves as cofactor.

The protein resides in the cytoplasm. It carries out the reaction trypanothione + NADP(+) = trypanothione disulfide + NADPH + H(+). Trypanothione is the parasite analog of glutathione; this enzyme is the equivalent of glutathione reductase. The chain is Trypanothione reductase (TPR) from Trypanosoma brucei brucei.